A 106-amino-acid polypeptide reads, in one-letter code: Chaperone modulatory protein CbpM (106 aa).

The protein belongs to the CbpM family.

Functionally, interacts with CbpA and inhibits both the DnaJ-like co-chaperone activity and the DNA binding activity of CbpA. Together with CbpA, modulates the activity of the DnaK chaperone system. Does not inhibit the co-chaperone activity of DnaJ. The protein is Chaperone modulatory protein CbpM of Coxiella burnetii (strain CbuK_Q154) (Coxiella burnetii (strain Q154)).